We begin with the raw amino-acid sequence, 372 residues long: 3-dehydroquinate synthase (372 aa).

NAD(+) contacts are provided by residues 116-120, 140-141, Lys153, Lys162, and 180-183; these read GVVGD, TT, and TLNT. Zn(2+) is bound by residues Glu195, His260, and His277.

The protein belongs to the sugar phosphate cyclases superfamily. Dehydroquinate synthase family. The cofactor is Co(2+). It depends on Zn(2+) as a cofactor. NAD(+) is required as a cofactor.

It is found in the cytoplasm. It catalyses the reaction 7-phospho-2-dehydro-3-deoxy-D-arabino-heptonate = 3-dehydroquinate + phosphate. The protein operates within metabolic intermediate biosynthesis; chorismate biosynthesis; chorismate from D-erythrose 4-phosphate and phosphoenolpyruvate: step 2/7. Its function is as follows. Catalyzes the conversion of 3-deoxy-D-arabino-heptulosonate 7-phosphate (DAHP) to dehydroquinate (DHQ). In Prochlorococcus marinus (strain MIT 9303), this protein is 3-dehydroquinate synthase.